The sequence spans 450 residues: Phosphoglucosamine mutase (450 aa).

The active-site Phosphoserine intermediate is the serine 107. Residues serine 107, aspartate 246, aspartate 248, and aspartate 250 each coordinate Mg(2+). Serine 107 is subject to Phosphoserine.

Belongs to the phosphohexose mutase family. Requires Mg(2+) as cofactor. Activated by phosphorylation.

It catalyses the reaction alpha-D-glucosamine 1-phosphate = D-glucosamine 6-phosphate. In terms of biological role, catalyzes the conversion of glucosamine-6-phosphate to glucosamine-1-phosphate. The sequence is that of Phosphoglucosamine mutase from Aromatoleum aromaticum (strain DSM 19018 / LMG 30748 / EbN1) (Azoarcus sp. (strain EbN1)).